The following is a 49-amino-acid chain: Large ribosomal subunit protein bL33 (49 aa).

Belongs to the bacterial ribosomal protein bL33 family.

This Desulforamulus reducens (strain ATCC BAA-1160 / DSM 100696 / MI-1) (Desulfotomaculum reducens) protein is Large ribosomal subunit protein bL33.